Reading from the N-terminus, the 150-residue chain is Large ribosomal subunit protein uL13 (150 aa).

The interval 129 to 150 (AEHPHAAQQPKPLQLDPAATAQ) is disordered.

Belongs to the universal ribosomal protein uL13 family. In terms of assembly, part of the 50S ribosomal subunit.

Its function is as follows. This protein is one of the early assembly proteins of the 50S ribosomal subunit, although it is not seen to bind rRNA by itself. It is important during the early stages of 50S assembly. This chain is Large ribosomal subunit protein uL13, found in Synechococcus sp. (strain WH7803).